A 258-amino-acid polypeptide reads, in one-letter code: Imidazole glycerol phosphate synthase subunit HisF (258 aa).

Residues aspartate 11 and aspartate 130 contribute to the active site.

This sequence belongs to the HisA/HisF family. Heterodimer of HisH and HisF.

Its subcellular location is the cytoplasm. The enzyme catalyses 5-[(5-phospho-1-deoxy-D-ribulos-1-ylimino)methylamino]-1-(5-phospho-beta-D-ribosyl)imidazole-4-carboxamide + L-glutamine = D-erythro-1-(imidazol-4-yl)glycerol 3-phosphate + 5-amino-1-(5-phospho-beta-D-ribosyl)imidazole-4-carboxamide + L-glutamate + H(+). The protein operates within amino-acid biosynthesis; L-histidine biosynthesis; L-histidine from 5-phospho-alpha-D-ribose 1-diphosphate: step 5/9. IGPS catalyzes the conversion of PRFAR and glutamine to IGP, AICAR and glutamate. The HisF subunit catalyzes the cyclization activity that produces IGP and AICAR from PRFAR using the ammonia provided by the HisH subunit. This Nitrobacter winogradskyi (strain ATCC 25391 / DSM 10237 / CIP 104748 / NCIMB 11846 / Nb-255) protein is Imidazole glycerol phosphate synthase subunit HisF.